Reading from the N-terminus, the 914-residue chain is Probable dipeptidyl-aminopeptidase B (914 aa).

The span at 1-10 shows a compositional bias: basic and acidic residues; that stretch reads MATFSDHETS. The interval 1-63 is disordered; it reads MATFSDHETS…TGMDNGDRYR (63 aa). Residues 1-91 are Cytoplasmic-facing; the sequence is MATFSDHETS…KAATGGRARR (91 aa). Residues 20–35 are compositionally biased toward low complexity; that stretch reads STSSASQTSSDSGLSS. Residues 45-56 are compositionally biased toward polar residues; the sequence is QPFSAPNGTTGM. Residues 92–112 traverse the membrane as a helical; Signal-anchor for type II membrane protein segment; sequence IFWLLVLLCFGGWLLAFVLFL. Over 113 to 914 the chain is Vacuolar; sequence TGGRANYQSA…RFKRSLPVLV (802 aa). 3 N-linked (GlcNAc...) asparagine glycosylation sites follow: Asn348, Asn565, and Asn639. Ser753 acts as the Charge relay system in catalysis. Residue Asn807 is glycosylated (N-linked (GlcNAc...) asparagine). Catalysis depends on charge relay system residues Asp830 and His863.

This sequence belongs to the peptidase S9B family.

Its subcellular location is the vacuole membrane. The catalysed reaction is Release of an N-terminal dipeptide, Xaa-Yaa-|-Zaa-, from a polypeptide, preferentially when Yaa is Pro, provided Zaa is neither Pro nor hydroxyproline.. In terms of biological role, type IV dipeptidyl-peptidase which removes N-terminal dipeptides sequentially from polypeptides having unsubstituted N-termini provided that the penultimate residue is proline. The sequence is that of Probable dipeptidyl-aminopeptidase B (dapB) from Aspergillus clavatus (strain ATCC 1007 / CBS 513.65 / DSM 816 / NCTC 3887 / NRRL 1 / QM 1276 / 107).